The chain runs to 69 residues: MLKILIKIIGIYQRYLSPLTGPTCRFYPSCSTYAKESLMRHGLLKGLWYSAVRIMKCHPYHPGGYDPVK.

The protein belongs to the UPF0161 family.

Its subcellular location is the cell inner membrane. Functionally, could be involved in insertion of integral membrane proteins into the membrane. In Geobacter metallireducens (strain ATCC 53774 / DSM 7210 / GS-15), this protein is Putative membrane protein insertion efficiency factor.